A 245-amino-acid chain; its full sequence is Probable phosphatase YcdX (245 aa).

The Zn(2+) site is built by H7, H9, H15, H40, E73, H101, H131, D192, and H194.

It belongs to the PHP family. Homotrimer. Zn(2+) serves as cofactor.

This Escherichia fergusonii (strain ATCC 35469 / DSM 13698 / CCUG 18766 / IAM 14443 / JCM 21226 / LMG 7866 / NBRC 102419 / NCTC 12128 / CDC 0568-73) protein is Probable phosphatase YcdX.